Consider the following 180-residue polypeptide: Translation initiation factor IF-3 (180 aa).

Belongs to the IF-3 family. Monomer.

It localises to the cytoplasm. IF-3 binds to the 30S ribosomal subunit and shifts the equilibrium between 70S ribosomes and their 50S and 30S subunits in favor of the free subunits, thus enhancing the availability of 30S subunits on which protein synthesis initiation begins. This Salmonella paratyphi A (strain ATCC 9150 / SARB42) protein is Translation initiation factor IF-3.